The chain runs to 107 residues: uncharacterized protein (107 aa).

The first 18 residues, 1 to 18 (MRTLMLIILSILIYLSSA), serve as a signal peptide directing secretion.

This is an uncharacterized protein from Caenorhabditis elegans.